A 259-amino-acid polypeptide reads, in one-letter code: Ubiquinone biosynthesis protein COQ4 homolog, mitochondrial (259 aa).

Zn(2+) is bound by residues H162, D163, H166, and E178.

This sequence belongs to the COQ4 family. Component of a multi-subunit COQ enzyme complex. The cofactor is Zn(2+).

It is found in the mitochondrion inner membrane. The enzyme catalyses a 4-hydroxy-3-methoxy-5-(all-trans-polyprenyl)benzoate + H(+) = a 2-methoxy-6-(all-trans-polyprenyl)phenol + CO2. It participates in cofactor biosynthesis; ubiquinone biosynthesis. Its function is as follows. Lyase that catalyzes the C1-decarboxylation of 4-hydroxy-3-methoxy-5-(all-trans-polyprenyl)benzoic acid into 2-methoxy-6-(all-trans-polyprenyl)phenol during ubiquinone biosynthesis. The protein is Ubiquinone biosynthesis protein COQ4 homolog, mitochondrial of Bombyx mori (Silk moth).